A 119-amino-acid chain; its full sequence is Ribonuclease P protein component (119 aa).

This sequence belongs to the RnpA family. As to quaternary structure, consists of a catalytic RNA component (M1 or rnpB) and a protein subunit.

It catalyses the reaction Endonucleolytic cleavage of RNA, removing 5'-extranucleotides from tRNA precursor.. Its function is as follows. RNaseP catalyzes the removal of the 5'-leader sequence from pre-tRNA to produce the mature 5'-terminus. It can also cleave other RNA substrates such as 4.5S RNA. The protein component plays an auxiliary but essential role in vivo by binding to the 5'-leader sequence and broadening the substrate specificity of the ribozyme. This chain is Ribonuclease P protein component, found in Edwardsiella ictaluri (strain 93-146).